Consider the following 61-residue polypeptide: Large ribosomal subunit protein uL30 (61 aa).

Belongs to the universal ribosomal protein uL30 family. Part of the 50S ribosomal subunit.

This is Large ribosomal subunit protein uL30 from Acidithiobacillus ferrooxidans (strain ATCC 23270 / DSM 14882 / CIP 104768 / NCIMB 8455) (Ferrobacillus ferrooxidans (strain ATCC 23270)).